A 398-amino-acid chain; its full sequence is Argininosuccinate synthase (398 aa).

ATP is bound by residues 9-17 (AYSGGLDTS) and A36. L-citrulline contacts are provided by Y87 and S92. G117 is a binding site for ATP. Positions 119, 123, and 124 each coordinate L-aspartate. An L-citrulline-binding site is contributed by N123. Residues R127, S176, S185, E261, and Y273 each coordinate L-citrulline.

This sequence belongs to the argininosuccinate synthase family. Type 1 subfamily. In terms of assembly, homotetramer.

The protein resides in the cytoplasm. The enzyme catalyses L-citrulline + L-aspartate + ATP = 2-(N(omega)-L-arginino)succinate + AMP + diphosphate + H(+). It functions in the pathway amino-acid biosynthesis; L-arginine biosynthesis; L-arginine from L-ornithine and carbamoyl phosphate: step 2/3. The polypeptide is Argininosuccinate synthase (Desulfotalea psychrophila (strain LSv54 / DSM 12343)).